A 513-amino-acid polypeptide reads, in one-letter code: GMP synthase [glutamine-hydrolyzing] (513 aa).

In terms of domain architecture, Glutamine amidotransferase type-1 spans 8–198 (KIIVLDYGSQ…ALNTCGAKGN (191 aa)). Cys85 serves as the catalytic Nucleophile. Residues His172 and Glu174 contribute to the active site. Residues 199 to 388 (WSMENFIDMQ…LGMPDEIVWR (190 aa)) form the GMPS ATP-PPase domain. 226-232 (SGGVDSS) provides a ligand contact to ATP.

As to quaternary structure, homodimer.

The catalysed reaction is XMP + L-glutamine + ATP + H2O = GMP + L-glutamate + AMP + diphosphate + 2 H(+). Its pathway is purine metabolism; GMP biosynthesis; GMP from XMP (L-Gln route): step 1/1. Catalyzes the synthesis of GMP from XMP. This Lactococcus lactis subsp. cremoris (strain SK11) protein is GMP synthase [glutamine-hydrolyzing].